We begin with the raw amino-acid sequence, 360 residues long: DNA replication and repair protein RecF (360 aa).

30-37 (GANGSGKT) lines the ATP pocket.

The protein belongs to the RecF family.

It is found in the cytoplasm. The RecF protein is involved in DNA metabolism; it is required for DNA replication and normal SOS inducibility. RecF binds preferentially to single-stranded, linear DNA. It also seems to bind ATP. The chain is DNA replication and repair protein RecF from Acinetobacter baumannii (strain SDF).